The following is a 119-amino-acid chain: MSLLEAFAFSSWALGLGLSKVEQFQLSISTEVKKSIDIPCKISSTRFETDVIHWYRQKPNQALEHLIYIVSTKSAARRSMGKTSNKVEARKNSQTLTSILTIKSVEKEDMAVYYCAAWD.

Residues 1-19 (MSLLEAFAFSSWALGLGLS) form the signal peptide. The region spanning 24–119 (FQLSISTEVK…MAVYYCAAWD (96 aa)) is the Ig-like domain. A disulfide bridge links C40 with C115.

As to quaternary structure, gamma-delta TR is a heterodimer composed of a gamma and delta chain; disulfide-linked. The gamma-delta TR is associated with the transmembrane signaling CD3 coreceptor proteins following the stoichiometry: a single gamma-delta TR heterodimer associates with one CD3D-CD3E heterodimer, one CD3G-CD3E heterodimer and one CD247 homodimer forming a stable octameric structure. Upon activation, gamma-delta TR complex associates with FCER1G to initiate intracellular signaling.

It is found in the cell membrane. Its function is as follows. Probable non-functional open reading frame (ORF) of V region of the variable domain of T cell receptor (TR) gamma chain. Non-functional ORF generally cannot participate in the synthesis of a productive T cell receptor (TR) chain due to altered V-(D)-J or switch recombination and/or splicing site (at mRNA level) and/or conserved amino acid change (protein level). Gamma-delta TRs recognize a variety of self and foreign non-peptide antigens frequently expressed at the epithelial boundaries between the host and external environment, including endogenous lipids presented by MH-like protein CD1D and phosphoantigens presented by butyrophilin-like molecule BTN3A1. Upon antigen recognition induces rapid, innate-like immune responses involved in pathogen clearance and tissue repair. Binding of gamma-delta TR complex to antigen triggers phosphorylation of immunoreceptor tyrosine-based activation motifs (ITAMs) in the CD3 chains by the LCK and FYN kinases, allowing the recruitment, phosphorylation, and activation of ZAP70 that facilitates phosphorylation of the scaffolding proteins LCP2 and LAT. This lead to the formation of a supramolecular signalosome that recruits the phospholipase PLCG1, resulting in calcium mobilization and ERK activation, ultimately leading to T cell expansion and differentiation into effector cells. Gamma-delta TRs are produced through somatic rearrangement of a limited repertoire of variable (V), diversity (D), and joining (J) genes. The potential diversity of gamma-delta TRs is conferred by the unique ability to rearrange (D) genes in tandem and to utilize all three reading frames. The combinatorial diversity is considerably increased by the sequence exonuclease trimming and random nucleotide (N) region additions which occur during the V-(D)-J rearrangements. The polypeptide is Probable non-functional T cell receptor gamma variable 10 (Homo sapiens (Human)).